Here is a 1093-residue protein sequence, read N- to C-terminus: NACHT, LRR and PYD domains-containing protein 14 (1093 aa).

One can recognise a Pyrin domain in the interval 1 to 97 (MADSSSSSFF…CERAKEEINW (97 aa)). Positions 102-121 (IGPDDAKAGETQEDQEAVLG) are disordered. Residues 177-499 (QIVVLQGAAG…MFYMLKGSWE (323 aa)) form the NACHT domain. 183 to 190 (GAAGVGKT) is a binding site for ATP. LRR repeat units lie at residues 730-750 (NLMHLDLKGSDIGDNGVKSLC), 759-780 (KLQTLRLESCNLTVFCCLNISN), 787-807 (SLIFLNLSTNNLLDDGVQLLC), 816-836 (YLERLSLESCGLTEAGCEYLS), 844-864 (RLTHLCLADNVLGDGGVKLMS), 873-894 (TLKSLVLRRCHFTSLSSEYLST), 901-921 (SLTHLDLGSNWLQDNGVKLLC), 930-951 (NLQDLELMGCVLTNACCLDLAS), 958-978 (NLRSLDLGNNDLQDDGVKILC), 987-1008 (NIQRLGLEYCGLTSLCCQDLSS), and 1015-1035 (RLIKMNLTQNTLGYEGIVKLY).

It belongs to the NLRP family. Testis-specific.

Its subcellular location is the cytoplasm. Functionally, may be involved in inflammation and spermatogenesis. This chain is NACHT, LRR and PYD domains-containing protein 14 (NLRP14), found in Homo sapiens (Human).